A 437-amino-acid polypeptide reads, in one-letter code: UBX domain-containing protein 6 (437 aa).

2 disordered regions span residues 1-45 (MNSF…AQGG) and 89-109 (ERRQVEDLNISGTSSLQQPDR). A compositionally biased stretch (basic residues) spans 7–18 (FLNKKRVQNHFK). Residues 179–251 (ETAIETICKY…VFTKPSDVHL (73 aa)) form the PUB domain. The 78-residue stretch at 332 to 409 (YRYKYTLIRV…SLAPAALLHV (78 aa)) folds into the UBX domain.

Interacts with cdc-48.1 (via N-terminus) and cdc-48.2 (via N-terminus). As to expression, expressed in the pharynx and some head neurons.

Probably acts as an adapter for ATPase cdc-48.1 and/or cdc-48.2, conferring substrate specificity. Involved in the lysosomal clearance of cellular material in diet restricted conditions. This is UBX domain-containing protein 6 from Caenorhabditis elegans.